A 348-amino-acid chain; its full sequence is MTAPSQVLKIRRPDDWHVHLRDGDMLKTVVPYTSEIYGRAIVMPNLASPITTVDAAIAYRQRILNAVPAGHDFTPLMTCYLTDSLDADELERGFHEGVFTAAKLYPANATTNSSHGVTSVDAIMPVLERMEKLGMPLLVHGEVTHADVDIFDREARFIDTVMEPLRQRLTTLKVVFEHITTKDAAQYVRDGNDYLAATITPQHLMFNRNDMLVGGIRPHLYCLPILKRNIHQQALRELVASGFTRAFLGTDSAPHSRHRKETSCGCAGCFNAPSALGSYAAVFEEMNALAHFEAFCSLNGPQFYGLPVNAGWVELVRDEQQIPGNIALADDSLVPFLAGETIRWSVKK.

Residues histidine 17 and histidine 19 each contribute to the Zn(2+) site. Substrate-binding positions include 19–21 (HLR) and asparagine 45. Residues lysine 103, histidine 140, and histidine 178 each coordinate Zn(2+). Residue lysine 103 is modified to N6-carboxylysine. Position 140 (histidine 140) interacts with substrate. Leucine 223 provides a ligand contact to substrate. Aspartate 251 provides a ligand contact to Zn(2+). The active site involves aspartate 251. Histidine 255 and alanine 267 together coordinate substrate.

This sequence belongs to the metallo-dependent hydrolases superfamily. DHOase family. Class II DHOase subfamily. As to quaternary structure, homodimer. Zn(2+) is required as a cofactor.

The catalysed reaction is (S)-dihydroorotate + H2O = N-carbamoyl-L-aspartate + H(+). It participates in pyrimidine metabolism; UMP biosynthesis via de novo pathway; (S)-dihydroorotate from bicarbonate: step 3/3. Its function is as follows. Catalyzes the reversible cyclization of carbamoyl aspartate to dihydroorotate. This Salmonella heidelberg (strain SL476) protein is Dihydroorotase.